The primary structure comprises 249 residues: Phosphatidylserine decarboxylase proenzyme (249 aa).

Ser-208 serves as the catalytic Schiff-base intermediate with substrate; via pyruvic acid. Ser-208 is subject to Pyruvic acid (Ser); by autocatalysis.

Belongs to the phosphatidylserine decarboxylase family. PSD-A subfamily. As to quaternary structure, heterodimer of a large membrane-associated beta subunit and a small pyruvoyl-containing alpha subunit. Requires pyruvate as cofactor. In terms of processing, is synthesized initially as an inactive proenzyme. Formation of the active enzyme involves a self-maturation process in which the active site pyruvoyl group is generated from an internal serine residue via an autocatalytic post-translational modification. Two non-identical subunits are generated from the proenzyme in this reaction, and the pyruvate is formed at the N-terminus of the alpha chain, which is derived from the carboxyl end of the proenzyme. The post-translation cleavage follows an unusual pathway, termed non-hydrolytic serinolysis, in which the side chain hydroxyl group of the serine supplies its oxygen atom to form the C-terminus of the beta chain, while the remainder of the serine residue undergoes an oxidative deamination to produce ammonia and the pyruvoyl prosthetic group on the alpha chain.

Its subcellular location is the cell membrane. The enzyme catalyses a 1,2-diacyl-sn-glycero-3-phospho-L-serine + H(+) = a 1,2-diacyl-sn-glycero-3-phosphoethanolamine + CO2. It participates in phospholipid metabolism; phosphatidylethanolamine biosynthesis; phosphatidylethanolamine from CDP-diacylglycerol: step 2/2. Functionally, catalyzes the formation of phosphatidylethanolamine (PtdEtn) from phosphatidylserine (PtdSer). This Erythrobacter litoralis (strain HTCC2594) protein is Phosphatidylserine decarboxylase proenzyme.